Here is a 297-residue protein sequence, read N- to C-terminus: D-aminoacyl-tRNA deacylase (297 aa).

Belongs to the DtdA deacylase family. Monomer. Requires Zn(2+) as cofactor.

It carries out the reaction a D-aminoacyl-tRNA + H2O = a tRNA + a D-alpha-amino acid + H(+). The enzyme catalyses glycyl-tRNA(Ala) + H2O = tRNA(Ala) + glycine + H(+). Its function is as follows. D-aminoacyl-tRNA deacylase with broad substrate specificity. By recycling D-aminoacyl-tRNA to D-amino acids and free tRNA molecules, this enzyme counteracts the toxicity associated with the formation of D-aminoacyl-tRNA entities in vivo. The sequence is that of D-aminoacyl-tRNA deacylase from Methanosarcina acetivorans (strain ATCC 35395 / DSM 2834 / JCM 12185 / C2A).